The primary structure comprises 554 residues: Probable urocanate hydratase (554 aa).

NAD(+) is bound by residues 49–50 (GG), Q127, E194, 240–241 (NA), 261–265 (QTAAH), 271–272 (YI), and Y320. Residue C408 is part of the active site. G490 lines the NAD(+) pocket.

It belongs to the urocanase family. Requires NAD(+) as cofactor.

The protein resides in the cytoplasm. It catalyses the reaction 4-imidazolone-5-propanoate = trans-urocanate + H2O. It participates in amino-acid degradation; L-histidine degradation into L-glutamate; N-formimidoyl-L-glutamate from L-histidine: step 2/3. In terms of biological role, catalyzes the conversion of urocanate to 4-imidazolone-5-propionate. The chain is Probable urocanate hydratase from Thermoplasma acidophilum (strain ATCC 25905 / DSM 1728 / JCM 9062 / NBRC 15155 / AMRC-C165).